The following is a 55-amino-acid chain: ADANKVWPTGLTVAEAEELHTYVTNGFRVFVGIAVVAHVLVFAAHPWGRGGALVA.

Topologically, residues 1-21 (ADANKVWPTGLTVAEAEELHT) are cytoplasmic. The helical transmembrane segment at 22 to 44 (YVTNGFRVFVGIAVVAHVLVFAA) threads the bilayer. Histidine 38 contributes to the a bacteriochlorophyll binding site. Residues 45–55 (HPWGRGGALVA) are Periplasmic-facing.

Belongs to the antenna complex beta subunit family. As to quaternary structure, the core complex is formed by different alpha and beta chains, binding bacteriochlorophyll molecules, and arranged most probably in tetrameric structures disposed around the reaction center. The non-pigmented gamma chains may constitute additional components.

It is found in the cell inner membrane. Functionally, antenna complexes are light-harvesting systems, which transfer the excitation energy to the reaction centers. The chain is Light-harvesting polypeptide B-800/860 beta chain from Rhodocyclus tenuis (Rhodospirillum tenue).